The following is a 349-amino-acid chain: 4-hydroxy-3-methylbut-2-en-1-yl diphosphate synthase (flavodoxin) (349 aa).

4 residues coordinate [4Fe-4S] cluster: Cys264, Cys267, Cys299, and Glu306.

This sequence belongs to the IspG family. [4Fe-4S] cluster is required as a cofactor.

The catalysed reaction is (2E)-4-hydroxy-3-methylbut-2-enyl diphosphate + oxidized [flavodoxin] + H2O + 2 H(+) = 2-C-methyl-D-erythritol 2,4-cyclic diphosphate + reduced [flavodoxin]. It functions in the pathway isoprenoid biosynthesis; isopentenyl diphosphate biosynthesis via DXP pathway; isopentenyl diphosphate from 1-deoxy-D-xylulose 5-phosphate: step 5/6. In terms of biological role, converts 2C-methyl-D-erythritol 2,4-cyclodiphosphate (ME-2,4cPP) into 1-hydroxy-2-methyl-2-(E)-butenyl 4-diphosphate. The sequence is that of 4-hydroxy-3-methylbut-2-en-1-yl diphosphate synthase (flavodoxin) from Clostridium perfringens (strain 13 / Type A).